A 440-amino-acid chain; its full sequence is O-glycoside alpha-1,2-mannosyltransferase homolog 4 (440 aa).

At 1 to 35 the chain is on the cytoplasmic side; that stretch reads MLGWNKHVFFSESRINFRCLLRKKLKKRCPLSARF. A helical; Signal-anchor for type II membrane protein membrane pass occupies residues 36–56; it reads VLVLLLIVLIFILKMGYKQLI. Residues 57 to 440 lie on the Lumenal side of the membrane; the sequence is YKLNHPPLRR…NLIGDGFLDE (384 aa). Catalysis depends on Glu336, which acts as the Nucleophile.

It belongs to the glycosyltransferase 15 family.

The protein localises to the cytoplasm. It is found in the nucleus. It localises to the golgi apparatus membrane. Probable mannosyltransferase involved in O-glycosylation of cell wall and secreted proteins. Transfers an alpha-D-mannosyl residue from GDP-mannose into lipid-linked oligosaccharide, forming an alpha-(1-&gt;2)-D-mannosyl-D-mannose linkage. The chain is O-glycoside alpha-1,2-mannosyltransferase homolog 4 (omh4) from Schizosaccharomyces pombe (strain 972 / ATCC 24843) (Fission yeast).